The primary structure comprises 451 residues: AAA-ATPase At3g28570, mitochondrial (451 aa).

A mitochondrion-targeting transit peptide spans 1–48 (MFAENLTRIGSNVAGLFFVWSTLKRYFPRQIQQLLFNAIQRIPIFKRL). 243–250 (GPPGTGKS) contributes to the ATP binding site.

This sequence belongs to the AAA ATPase family. BCS1 subfamily. Mg(2+) is required as a cofactor.

Its subcellular location is the mitochondrion. It catalyses the reaction ATP + H2O = ADP + phosphate + H(+). In Arabidopsis thaliana (Mouse-ear cress), this protein is AAA-ATPase At3g28570, mitochondrial.